The following is a 193-amino-acid chain: Putative zinc finger protein 726P1 (193 aa).

The C2H2-type 1; degenerate zinc-finger motif lies at 18 to 40 (YKCKKCGKTFNWSSILTNNKKIH). Residues 46 to 68 (YKCEECGKAFKQHSTLTTHKIIC) form a C2H2-type 2; atypical zinc finger. The segment at 74 to 96 (YRCEECGKAFCQPSTLTRYKRMH) adopts a C2H2-type 3; degenerate zinc-finger fold. A C2H2-type 4 zinc finger spans residues 102-124 (YKCEECGKAFTQFSTLTKHKRIH). The segment at 130–152 (YKCEESGKAFIWSSGLTEHRRVH) adopts a C2H2-type 5; degenerate zinc-finger fold. Residues 158-180 (YKCEECGKALIQFSTLTRHKRIH) form a C2H2-type 6 zinc finger.

This Homo sapiens (Human) protein is Putative zinc finger protein 726P1 (ZNF726P1).